Here is a 179-residue protein sequence, read N- to C-terminus: UPF0227 protein PM0825 (179 aa).

The protein belongs to the UPF0227 family.

This is UPF0227 protein PM0825 from Pasteurella multocida (strain Pm70).